A 101-amino-acid chain; its full sequence is Putative pterin-4-alpha-carbinolamine dehydratase (101 aa).

The protein belongs to the pterin-4-alpha-carbinolamine dehydratase family.

The catalysed reaction is (4aS,6R)-4a-hydroxy-L-erythro-5,6,7,8-tetrahydrobiopterin = (6R)-L-erythro-6,7-dihydrobiopterin + H2O. In Ralstonia pickettii (strain 12J), this protein is Putative pterin-4-alpha-carbinolamine dehydratase.